The following is a 395-amino-acid chain: Galactokinase (395 aa).

39–42 contacts substrate; that stretch reads EHTD. ATP is bound by residues Ser73 and 127–133; that span reads GAGLSSS. Positions 133 and 165 each coordinate Mg(2+). The active-site Proton acceptor is the Asp177. Tyr227 is a binding site for substrate.

This sequence belongs to the GHMP kinase family. GalK subfamily.

The protein localises to the cytoplasm. It carries out the reaction alpha-D-galactose + ATP = alpha-D-galactose 1-phosphate + ADP + H(+). Its pathway is carbohydrate metabolism; galactose metabolism. Its function is as follows. Catalyzes the transfer of the gamma-phosphate of ATP to D-galactose to form alpha-D-galactose-1-phosphate (Gal-1-P). The chain is Galactokinase from Halalkalibacterium halodurans (strain ATCC BAA-125 / DSM 18197 / FERM 7344 / JCM 9153 / C-125) (Bacillus halodurans).